Reading from the N-terminus, the 232-residue chain is uncharacterized protein (232 aa).

This is an uncharacterized protein from Eriophyes pyri (pearleaf blister mite).